The primary structure comprises 425 residues: 3-phosphoshikimate 1-carboxyvinyltransferase (425 aa).

3 residues coordinate 3-phosphoshikimate: Lys-22, Ser-23, and Arg-27. Phosphoenolpyruvate is bound at residue Lys-22. Residues Gly-95 and Arg-123 each coordinate phosphoenolpyruvate. 3-phosphoshikimate is bound by residues Ser-169, Ser-170, Gln-171, Ser-197, Asp-313, Asn-336, and Lys-340. Position 171 (Gln-171) interacts with phosphoenolpyruvate. Catalysis depends on Asp-313, which acts as the Proton acceptor. Phosphoenolpyruvate-binding residues include Arg-344, Arg-386, and Lys-411.

Belongs to the EPSP synthase family. Monomer.

The protein resides in the cytoplasm. The enzyme catalyses 3-phosphoshikimate + phosphoenolpyruvate = 5-O-(1-carboxyvinyl)-3-phosphoshikimate + phosphate. The protein operates within metabolic intermediate biosynthesis; chorismate biosynthesis; chorismate from D-erythrose 4-phosphate and phosphoenolpyruvate: step 6/7. Functionally, catalyzes the transfer of the enolpyruvyl moiety of phosphoenolpyruvate (PEP) to the 5-hydroxyl of shikimate-3-phosphate (S3P) to produce enolpyruvyl shikimate-3-phosphate and inorganic phosphate. This is 3-phosphoshikimate 1-carboxyvinyltransferase from Pseudoalteromonas translucida (strain TAC 125).